We begin with the raw amino-acid sequence, 1247 residues long: Leucine-rich repeat-containing protein 53 (1247 aa).

LRR repeat units follow at residues 34–55 (TTRVLIITDGYLSSIESTNLSL), 58–79 (NLALLSLSRNGIEDVQEDALHG), 82–102 (MLRTLLLEHNQISSSSLTDHT), 108–129 (SLQVLVLSNNALRTLRGSWFRN), 132–153 (GLTRLQLDGNQITNLTDSSFGG), 158–179 (SLRYLDLSNNFISYIGKDAFRP), and 182–203 (QLQEVDLSRNRLAHMPDVFTPL). One can recognise an LRRCT domain in the interval 214–271 (NQWSCTCDLHPLARFLRNYIKSSAHTLRNAKDLNCQPSTAAVAAAQSVLRLSETNCDS). Residues 294–314 (LLTVLGFAGAVGLTCLGLVVF) form a helical membrane-spanning segment. Disordered stretches follow at residues 828–866 (SAGHIPDGNTSKLPQPTPTDAEHRHSHSQFSTEQMEDAT), 887–927 (VLPF…SPRN), and 1223–1247 (ENSAPKPVLYPPSAEYATTSPLETE). Composition is skewed to polar residues over residues 898 to 927 (DQGTTESTEHMGQNVSKTSELNQFSLSPRN) and 1238 to 1247 (YATTSPLETE).

It is found in the membrane. This chain is Leucine-rich repeat-containing protein 53 (LRRC53), found in Homo sapiens (Human).